Reading from the N-terminus, the 368-residue chain is BTB/POZ and TAZ domain-containing protein 5 (368 aa).

Positions 1-25 (MENMDDFSPENVLAPPPPPPPMKKS) are disordered. In terms of domain architecture, BTB spans 55-123 (ADVLIHTDDN…LYSSCYEKQD (69 aa)). A TAZ-type zinc finger spans residues 233–324 (QTYTQLYEAM…SEQCKVPLCS (92 aa)). The tract at residues 335 to 358 (RKDEKRWKLLVRNVLSTKRIGGSP) is caM-binding.

Interacts with CUL3A. Preferentially expressed in young leaves, roots and stems.

Its subcellular location is the cytoplasm. It participates in protein modification; protein ubiquitination. Functionally, may act as a substrate-specific adapter of an E3 ubiquitin-protein ligase complex (CUL3-RBX1-BTB) which mediates the ubiquitination and subsequent proteasomal degradation of target proteins. The chain is BTB/POZ and TAZ domain-containing protein 5 (BT5) from Arabidopsis thaliana (Mouse-ear cress).